A 416-amino-acid chain; its full sequence is MIVMFQKPRGTRDFLPEEMKKRRFVENKLREVFERYGYKEILTPTFESFELIAKKTGEEIRKQLYVFKDHGGREMALRPEMTSPVVRFYLNELKNLQKPLRLYYFANCFRYERPQAGRFREFWQMGCELIGCKEPLADAEVLNLAMDGLINIGLDFDVHIGHLGVLKGVLEKFNVSEEEEVKIRRLIDKEDYDNLKIYLTQILGEEKKELIFEILKFKGSREVLDELKEILKDFPKSMEAINNLEEILEFVIHDKYTINLGIARGLDYYTGMVFEIYGKKGAKQICGGGRYDNLIETFGGEPTPAVGFAYGFDRIMMNIDDLDIEEESILIIPVKKDKELIKKSLIIADKLRKAGKIVELEIMGRKLRKALDYANSRGFKKVIIVGEKELNEGKVTVKDMITGEQKLIGIDELTNF.

It belongs to the class-II aminoacyl-tRNA synthetase family.

The protein resides in the cytoplasm. The catalysed reaction is tRNA(His) + L-histidine + ATP = L-histidyl-tRNA(His) + AMP + diphosphate + H(+). This Methanocaldococcus jannaschii (strain ATCC 43067 / DSM 2661 / JAL-1 / JCM 10045 / NBRC 100440) (Methanococcus jannaschii) protein is Histidine--tRNA ligase (hisS).